The sequence spans 131 residues: Small ribosomal subunit protein uS8 (131 aa).

It belongs to the universal ribosomal protein uS8 family. Part of the 30S ribosomal subunit. Contacts proteins S5 and S12.

In terms of biological role, one of the primary rRNA binding proteins, it binds directly to 16S rRNA central domain where it helps coordinate assembly of the platform of the 30S subunit. This is Small ribosomal subunit protein uS8 from Variovorax paradoxus (strain S110).